Consider the following 385-residue polypeptide: Putative UDP-N-acetylglucosamine 2-epimerase (385 aa).

It belongs to the UDP-N-acetylglucosamine 2-epimerase family.

The protein resides in the cytoplasm. The enzyme catalyses UDP-N-acetyl-alpha-D-glucosamine = UDP-N-acetyl-alpha-D-mannosamine. This is Putative UDP-N-acetylglucosamine 2-epimerase from Clostridium acetobutylicum (strain ATCC 824 / DSM 792 / JCM 1419 / IAM 19013 / LMG 5710 / NBRC 13948 / NRRL B-527 / VKM B-1787 / 2291 / W).